The chain runs to 437 residues: Pterin deaminase (437 aa).

Residues His80 and His82 each coordinate a divalent metal cation. Position 85 (Lys85) interacts with substrate. His231 serves as a coordination point for a divalent metal cation. Glu234 acts as the Proton donor in catalysis. Residue Asp331 participates in a divalent metal cation binding. 331–332 provides a ligand contact to substrate; sequence DN.

It belongs to the metallo-dependent hydrolases superfamily. Pterin deaminase family. A divalent metal cation serves as cofactor.

The enzyme catalyses a 2-amino-4-hydroxypteridine + H2O + H(+) = a 2,4-dihydroxypteridine + NH4(+). It carries out the reaction L-sepiapterin + H2O + H(+) = (S)-xanthopterin-B2 + NH4(+). Its function is as follows. Catalyzes the deamination of many pterin metabolites, such as formylpterin, pterin-6-carboxylate, pterin-7-carboxylate, pterin, hydroxymethylpterin, biopterin, D-(+)-neopterin, isoxanthopterin, sepiapterin, folate, xanthopterin, and 7,8-dihydrohydroxymethylpterin. May be involved in a degradative pathway for catabolizing pterin rings. This Rhizobium rhizogenes (strain K84 / ATCC BAA-868) (Agrobacterium radiobacter) protein is Pterin deaminase.